The chain runs to 317 residues: D-alanine--D-alanine ligase (317 aa).

In terms of domain architecture, ATP-grasp spans 103–299; that stretch reads KHIFRSLNID…FNELVKIIIE (197 aa). 130-183 provides a ligand contact to ATP; the sequence is KIDYPYVLKPINEGSSIGVYIIFSHEDYLELKDNSSTIMEKMIVEEYIPGIELH. Mg(2+) is bound by residues aspartate 251, glutamate 265, and asparagine 267.

This sequence belongs to the D-alanine--D-alanine ligase family. Requires Mg(2+) as cofactor. Mn(2+) is required as a cofactor.

Its subcellular location is the cytoplasm. The catalysed reaction is 2 D-alanine + ATP = D-alanyl-D-alanine + ADP + phosphate + H(+). It participates in cell wall biogenesis; peptidoglycan biosynthesis. Its function is as follows. Cell wall formation. This chain is D-alanine--D-alanine ligase, found in Wolbachia sp. subsp. Drosophila simulans (strain wRi).